Reading from the N-terminus, the 212-residue chain is MAIDKTKNQHRINEAIRVKEVRLVGDNVEQGVYNIQEARRIAESQDLDLVEISPNADPPVCRVTDYQKFVYQLKKKAKEQKAKSVKIVIKEIRFGPQTDDHDYNFKLKHAKEFLQEGSKVKAYVFFRGRSILFKEQGEVLLLRFANDLEDFARVEQMPILEGKRMTIMLTPKSASKKGHTPPKTQVEASKQANESAETEEEKKRCHPTKPVL.

The disordered stretch occupies residues 171 to 212; the sequence is PKSASKKGHTPPKTQVEASKQANESAETEEEKKRCHPTKPVL. The segment covering 182-195 has biased composition (polar residues); that stretch reads PKTQVEASKQANES.

The protein belongs to the IF-3 family. Monomer.

It localises to the cytoplasm. Its function is as follows. IF-3 binds to the 30S ribosomal subunit and shifts the equilibrium between 70S ribosomes and their 50S and 30S subunits in favor of the free subunits, thus enhancing the availability of 30S subunits on which protein synthesis initiation begins. This is Translation initiation factor IF-3 from Porphyromonas gingivalis (strain ATCC 33277 / DSM 20709 / CIP 103683 / JCM 12257 / NCTC 11834 / 2561).